A 465-amino-acid chain; its full sequence is Poly(A) polymerase I (465 aa).

Active-site residues include Asp-80, Asp-82, and Asp-162. The disordered stretch occupies residues 429-465 (SAPPDQKGMLNELDEEPSPRRRTRRPRKRAPRREGTA). Positions 448–459 (RRRTRRPRKRAP) are enriched in basic residues.

This sequence belongs to the tRNA nucleotidyltransferase/poly(A) polymerase family.

The catalysed reaction is RNA(n) + ATP = RNA(n)-3'-adenine ribonucleotide + diphosphate. Adds poly(A) tail to the 3' end of many RNAs, which usually targets these RNAs for decay. Plays a significant role in the global control of gene expression, through influencing the rate of transcript degradation, and in the general RNA quality control. The protein is Poly(A) polymerase I of Escherichia coli O157:H7.